We begin with the raw amino-acid sequence, 545 residues long: CTP synthase (545 aa).

The segment at 1–266 (MTTNYIFVTG…DDYICKRFSL (266 aa)) is amidoligase domain. Ser14 is a CTP binding site. Ser14 serves as a coordination point for UTP. ATP contacts are provided by residues 15 to 20 (SLGKGI) and Asp72. The Mg(2+) site is built by Asp72 and Glu140. CTP is bound by residues 147 to 149 (DIE), 187 to 192 (KTKPTQ), and Lys223. Residues 187–192 (KTKPTQ) and Lys223 contribute to the UTP site. 239–241 (KDV) is a binding site for ATP. A Glutamine amidotransferase type-1 domain is found at 291–542 (TIGMVGKYIE…VKAASEFQKR (252 aa)). Gly352 is a binding site for L-glutamine. Cys379 functions as the Nucleophile; for glutamine hydrolysis in the catalytic mechanism. L-glutamine is bound by residues 380-383 (LGMQ), Glu403, and Arg470. Catalysis depends on residues His515 and Glu517.

The protein belongs to the CTP synthase family. As to quaternary structure, homotetramer.

The catalysed reaction is UTP + L-glutamine + ATP + H2O = CTP + L-glutamate + ADP + phosphate + 2 H(+). It catalyses the reaction L-glutamine + H2O = L-glutamate + NH4(+). The enzyme catalyses UTP + NH4(+) + ATP = CTP + ADP + phosphate + 2 H(+). It functions in the pathway pyrimidine metabolism; CTP biosynthesis via de novo pathway; CTP from UDP: step 2/2. Its activity is regulated as follows. Allosterically activated by GTP, when glutamine is the substrate; GTP has no effect on the reaction when ammonia is the substrate. The allosteric effector GTP functions by stabilizing the protein conformation that binds the tetrahedral intermediate(s) formed during glutamine hydrolysis. Inhibited by the product CTP, via allosteric rather than competitive inhibition. Functionally, catalyzes the ATP-dependent amination of UTP to CTP with either L-glutamine or ammonia as the source of nitrogen. Regulates intracellular CTP levels through interactions with the four ribonucleotide triphosphates. This Shigella boydii serotype 18 (strain CDC 3083-94 / BS512) protein is CTP synthase.